A 227-amino-acid polypeptide reads, in one-letter code: MLLRLPPVFLTVLIAIASCSVYILNIAIESGFADSPYNFNQTTVGLAYMSTGIGYILSSMAGGRWMDSIMAREARKVVRSDSHGKLISLPEDHMKENAWVANTLYPLSSLWFGWTMYYGVQFMVPISALFVFGFTLMLHFTLGTTMLTEFVRKRSSAGVTVNNFVRNILSCVGTIVAAPWMKGVGLRYMMTKLCIICLLLGSLGIWLITRNAQRWRGTLDKALKEMD.

A helical membrane pass occupies residues 8–28 (VFLTVLIAIASCSVYILNIAI). Asparagine 40 is a glycosylation site (N-linked (GlcNAc...) asparagine). The next 5 helical transmembrane spans lie at 43 to 63 (TVGL…MAGG), 100 to 120 (VANT…YYGV), 122 to 142 (FMVP…HFTL), 164 to 181 (FVRN…APWM), and 188 to 208 (YMMT…IWLI).

Belongs to the major facilitator superfamily.

It is found in the membrane. Functionally, MFS-type transporter; part of the Fusarium detoxification of benzoxazolinone cluster 1 (FDB1) involved in the degradation of benzoxazolinones produced by the host plant. Maize, wheat, and rye produce the 2 benzoxazinone phytoanticipins 2,4-dihy-droxy-7-methoxy-1,4-benzoxazin-3-one (DIMBOA) and 2,4-dihydroxy-1,4-benzoxazin-3-one (DIBOA) that, due to their inherent instability once released, spontaneously degrade to the more stable corresponding benzoxazolinones, 6-methoxy-2-benzoxazolinone (MBOA) and 2-benzoxazolinone (BOA), respectively. In Gibberella moniliformis (strain M3125 / FGSC 7600) (Maize ear and stalk rot fungus), this protein is MFS-type transporter FVEG_08288.